The chain runs to 271 residues: 3-deoxy-manno-octulosonate cytidylyltransferase (271 aa).

Belongs to the KdsB family.

The protein localises to the cytoplasm. The catalysed reaction is 3-deoxy-alpha-D-manno-oct-2-ulosonate + CTP = CMP-3-deoxy-beta-D-manno-octulosonate + diphosphate. It functions in the pathway nucleotide-sugar biosynthesis; CMP-3-deoxy-D-manno-octulosonate biosynthesis; CMP-3-deoxy-D-manno-octulosonate from 3-deoxy-D-manno-octulosonate and CTP: step 1/1. It participates in bacterial outer membrane biogenesis; lipopolysaccharide biosynthesis. Its function is as follows. Activates KDO (a required 8-carbon sugar) for incorporation into bacterial lipopolysaccharide in Gram-negative bacteria. The sequence is that of 3-deoxy-manno-octulosonate cytidylyltransferase from Leptothrix cholodnii (strain ATCC 51168 / LMG 8142 / SP-6) (Leptothrix discophora (strain SP-6)).